We begin with the raw amino-acid sequence, 228 residues long: Cytidylate kinase (228 aa).

17–25 (GPTASGKGT) serves as a coordination point for ATP.

This sequence belongs to the cytidylate kinase family. Type 1 subfamily.

It localises to the cytoplasm. It catalyses the reaction CMP + ATP = CDP + ADP. It carries out the reaction dCMP + ATP = dCDP + ADP. The sequence is that of Cytidylate kinase from Burkholderia mallei (strain NCTC 10247).